Consider the following 146-residue polypeptide: UPF0742 protein C1348.03 (146 aa).

A helical membrane pass occupies residues 38–60 (LTVKYCLAVKLLIYLLYCWYIYS).

Belongs to the UPF0742 family.

The protein localises to the cytoplasm. It localises to the nucleus membrane. This Schizosaccharomyces pombe (strain 972 / ATCC 24843) (Fission yeast) protein is UPF0742 protein C1348.03.